We begin with the raw amino-acid sequence, 277 residues long: Phosphonates import ATP-binding protein PhnC 2 (277 aa).

One can recognise an ABC transporter domain in the interval 5–253 (IHVQGLNKTF…FLNDLYGADA (249 aa)). Position 37–44 (37–44 (GASGSGKS)) interacts with ATP.

This sequence belongs to the ABC transporter superfamily. Phosphonates importer (TC 3.A.1.9.1) family. The complex is composed of two ATP-binding proteins (PhnC), two transmembrane proteins (PhnE) and a solute-binding protein (PhnD).

The protein localises to the cell inner membrane. The catalysed reaction is phosphonate(out) + ATP + H2O = phosphonate(in) + ADP + phosphate + H(+). Its function is as follows. Part of the ABC transporter complex PhnCDE involved in phosphonates import. Responsible for energy coupling to the transport system. This chain is Phosphonates import ATP-binding protein PhnC 2, found in Pseudomonas syringae pv. syringae (strain B728a).